A 130-amino-acid chain; its full sequence is MVMLDILSNALIQIKNAEVMGKRQVTIWPVNKLTYYTLRVLQRYGYVGEIEYVDDGRGGKYIVQLLGKINDIGPIRPRYPVKYREIVQWEQKFLPARQIGILVISTSQGVVSHIEAKEKKIGGVLLAYVY.

This sequence belongs to the universal ribosomal protein uS8 family. Part of the 30S ribosomal subunit.

Functionally, one of the primary rRNA binding proteins, it binds directly to 16S rRNA central domain where it helps coordinate assembly of the platform of the 30S subunit. The chain is Small ribosomal subunit protein uS8 from Pyrobaculum arsenaticum (strain DSM 13514 / JCM 11321 / PZ6).